The primary structure comprises 262 residues: Polyamine aminopropyltransferase (262 aa).

A PABS domain is found at 1-249 (MWITQEITPY…DIHRAAFALP (249 aa)). Residue Asn-29 participates in S-methyl-5'-thioadenosine binding. Asp-83 contacts spermidine. The active-site Proton acceptor is the Asp-155.

It belongs to the spermidine/spermine synthase family. In terms of assembly, homodimer or homotetramer.

Its subcellular location is the cytoplasm. It carries out the reaction S-adenosyl 3-(methylsulfanyl)propylamine + putrescine = S-methyl-5'-thioadenosine + spermidine + H(+). It functions in the pathway amine and polyamine biosynthesis; spermidine biosynthesis; spermidine from putrescine: step 1/1. Its function is as follows. Catalyzes the irreversible transfer of a propylamine group from the amino donor S-adenosylmethioninamine (decarboxy-AdoMet) to putrescine (1,4-diaminobutane) to yield spermidine. The polypeptide is Polyamine aminopropyltransferase (Helicobacter acinonychis (strain Sheeba)).